Consider the following 122-residue polypeptide: Probable DNA-directed RNA polymerase II subunit RPB11 (122 aa).

It belongs to the archaeal Rpo11/eukaryotic RPB11/RPC19 RNA polymerase subunit family. As to quaternary structure, component of the RNA polymerase II (Pol II) complex consisting of 12 subunits.

The protein resides in the nucleus. DNA-dependent RNA polymerase catalyzes the transcription of DNA into RNA using the four ribonucleoside triphosphates as substrates. Component of RNA polymerase II which synthesizes mRNA precursors and many functional non-coding RNAs. Pol II is the central component of the basal RNA polymerase II transcription machinery. It is composed of mobile elements that move relative to each other. RPB11 is part of the core element with the central large cleft. The chain is Probable DNA-directed RNA polymerase II subunit RPB11 (rpb-11) from Caenorhabditis elegans.